We begin with the raw amino-acid sequence, 978 residues long: Sensor histidine kinase TodS (978 aa).

Residues Cys-32–Ser-103 enclose the PAS 1 domain. The PAC 1 domain maps to Val-108–Leu-162. Residues Lys-187 to Ala-405 enclose the Histidine kinase 1 domain. His-190 bears the Phosphohistidine; by autocatalysis mark. Positions Arg-452–Val-567 constitute a Response regulatory domain. Asp-500 carries the post-translational modification 4-aspartylphosphate. The region spanning Ser-611–Gly-681 is the PAS 2 domain. Residues Tyr-685–Gln-737 enclose the PAC 2 domain. Positions Tyr-757 to Gln-974 constitute a Histidine kinase 2 domain. Phosphohistidine is present on His-760.

Homodimer. Binds as a dimer to a pseudopalindromic sequence. In terms of processing, autophosphorylated. Activation requires a sequential transfer of a phosphate group from a His in the primary transmitter domain, to an Asp in the receiver domain and to a His in the secondary transmitter domain.

Its subcellular location is the cytoplasm. It carries out the reaction ATP + protein L-histidine = ADP + protein N-phospho-L-histidine.. Functionally, member of the two-component regulatory system TodS/TodT involved in the regulation of toluene degradation. Phosphorylates TodT via a four-step phosphorelay in response to toluene. The sequence is that of Sensor histidine kinase TodS (todS) from Pseudomonas putida (strain ATCC 700007 / DSM 6899 / JCM 31910 / BCRC 17059 / LMG 24140 / F1).